Consider the following 432-residue polypeptide: Benzoyl-CoA reductase subunit B (432 aa).

It belongs to the FldB/FldC dehydratase alpha/beta subunit family. In terms of assembly, heterotetramer composed of A, B, C, and D subunits. Iron-sulfur cluster serves as cofactor. The cofactor is an oxidized flavin.

The enzyme catalyses cyclohexa-1,5-diene-1-carbonyl-CoA + oxidized 2[4Fe-4S]-[ferredoxin] + 2 ADP + 2 phosphate = reduced 2[4Fe-4S]-[ferredoxin] + benzoyl-CoA + 2 ATP + 2 H2O. It carries out the reaction 3-hydroxybenzoyl-CoA + AH2 + 2 ATP + 2 H2O = 3-hydroxycyclohexa-1,5-diene-1-carbonyl-CoA + A + 2 ADP + 2 phosphate + 2 H(+). Its function is as follows. Catalyzes the anaerobic reduction of benzoyl-CoA and 3-hydroxybenzoyl-CoA to form cyclohexa-1,5-diene-1-carbonyl-CoA and 3-hydroxycyclohexa-1,5-diene-1-carbonyl-CoA, respectively. The enzyme also reduces other benzoyl-CoA analogs with small substituents at the aromatic ring. This chain is Benzoyl-CoA reductase subunit B (bcrB), found in Thauera aromatica.